Here is a 325-residue protein sequence, read N- to C-terminus: Elongation factor P--(R)-beta-lysine ligase (325 aa).

Ser76 to Glu78 is a binding site for substrate. Residues Arg100–Glu102 and Asn109 each bind ATP. Substrate is bound at residue Tyr118. An ATP-binding site is contributed by Glu244–Leu245. Glu251 serves as a coordination point for substrate. Residue Gly300 participates in ATP binding.

Belongs to the class-II aminoacyl-tRNA synthetase family. EpmA subfamily. Homodimer.

The enzyme catalyses D-beta-lysine + L-lysyl-[protein] + ATP = N(6)-((3R)-3,6-diaminohexanoyl)-L-lysyl-[protein] + AMP + diphosphate + H(+). Its function is as follows. With EpmB is involved in the beta-lysylation step of the post-translational modification of translation elongation factor P (EF-P) on 'Lys-34'. Catalyzes the ATP-dependent activation of (R)-beta-lysine produced by EpmB, forming a lysyl-adenylate, from which the beta-lysyl moiety is then transferred to the epsilon-amino group of EF-P 'Lys-34'. The chain is Elongation factor P--(R)-beta-lysine ligase from Salmonella typhi.